The following is a 234-amino-acid chain: Leucyl/phenylalanyl-tRNA--protein transferase (234 aa).

This sequence belongs to the L/F-transferase family.

The protein localises to the cytoplasm. It carries out the reaction N-terminal L-lysyl-[protein] + L-leucyl-tRNA(Leu) = N-terminal L-leucyl-L-lysyl-[protein] + tRNA(Leu) + H(+). The enzyme catalyses N-terminal L-arginyl-[protein] + L-leucyl-tRNA(Leu) = N-terminal L-leucyl-L-arginyl-[protein] + tRNA(Leu) + H(+). It catalyses the reaction L-phenylalanyl-tRNA(Phe) + an N-terminal L-alpha-aminoacyl-[protein] = an N-terminal L-phenylalanyl-L-alpha-aminoacyl-[protein] + tRNA(Phe). In terms of biological role, functions in the N-end rule pathway of protein degradation where it conjugates Leu, Phe and, less efficiently, Met from aminoacyl-tRNAs to the N-termini of proteins containing an N-terminal arginine or lysine. The chain is Leucyl/phenylalanyl-tRNA--protein transferase from Nitratidesulfovibrio vulgaris (strain ATCC 29579 / DSM 644 / CCUG 34227 / NCIMB 8303 / VKM B-1760 / Hildenborough) (Desulfovibrio vulgaris).